The following is a 399-amino-acid chain: tRNA-specific 2-thiouridylase MnmA (399 aa).

ATP is bound by residues 18 to 25 (AMSGGVDS) and leucine 44. The Nucleophile role is filled by cysteine 112. Cysteine 112 and cysteine 213 are disulfide-bonded. ATP is bound at residue glycine 136. The interval 163-165 (RDQ) is interaction with tRNA. Cysteine 213 (cysteine persulfide intermediate) is an active-site residue.

It belongs to the MnmA/TRMU family.

The protein localises to the cytoplasm. It carries out the reaction S-sulfanyl-L-cysteinyl-[protein] + uridine(34) in tRNA + AH2 + ATP = 2-thiouridine(34) in tRNA + L-cysteinyl-[protein] + A + AMP + diphosphate + H(+). Catalyzes the 2-thiolation of uridine at the wobble position (U34) of tRNA, leading to the formation of s(2)U34. In Rhizobium rhizogenes (strain K84 / ATCC BAA-868) (Agrobacterium radiobacter), this protein is tRNA-specific 2-thiouridylase MnmA.